The sequence spans 360 residues: Histidinol-phosphate aminotransferase (360 aa).

N6-(pyridoxal phosphate)lysine is present on K222.

Belongs to the class-II pyridoxal-phosphate-dependent aminotransferase family. Histidinol-phosphate aminotransferase subfamily. As to quaternary structure, homodimer. Requires pyridoxal 5'-phosphate as cofactor.

The enzyme catalyses L-histidinol phosphate + 2-oxoglutarate = 3-(imidazol-4-yl)-2-oxopropyl phosphate + L-glutamate. The protein operates within amino-acid biosynthesis; L-histidine biosynthesis; L-histidine from 5-phospho-alpha-D-ribose 1-diphosphate: step 7/9. This is Histidinol-phosphate aminotransferase from Listeria innocua serovar 6a (strain ATCC BAA-680 / CLIP 11262).